Consider the following 145-residue polypeptide: Large ribosomal subunit protein uL16 (145 aa).

It belongs to the universal ribosomal protein uL16 family. In terms of assembly, part of the 50S ribosomal subunit.

In terms of biological role, binds 23S rRNA and is also seen to make contacts with the A and possibly P site tRNAs. This chain is Large ribosomal subunit protein uL16, found in Exiguobacterium sp. (strain ATCC BAA-1283 / AT1b).